Here is a 403-residue protein sequence, read N- to C-terminus: SEC14-like protein 2 (403 aa).

Lys-51 is subject to N6-succinyllysine. A CRAL-TRIO domain is found at 76 to 249; that stretch reads PPEVIQQYLS…EYGGTMTDPD (174 aa). N6-succinyllysine occurs at positions 253 and 257. Residues 275–383 form the GOLD domain; the sequence is KQQYEHSVQI…AKKVNFTVEV (109 aa). Lys-393 carries the post-translational modification N6-succinyllysine.

Monomer. As to expression, widely expressed. Strong expression in liver, brain and prostate.

Its subcellular location is the cytoplasm. The protein localises to the nucleus. In terms of biological role, carrier protein. Binds to some hydrophobic molecules and promotes their transfer between the different cellular sites. Binds with high affinity to alpha-tocopherol. Also binds with a weaker affinity to other tocopherols and to tocotrienols. May have a transcriptional activatory activity via its association with alpha-tocopherol. Probably recognizes and binds some squalene structure, suggesting that it may regulate cholesterol biosynthesis by increasing the transfer of squalene to a metabolic active pool in the cell. The chain is SEC14-like protein 2 (SEC14L2) from Homo sapiens (Human).